A 217-amino-acid chain; its full sequence is Probable transaldolase (217 aa).

K83 functions as the Schiff-base intermediate with substrate in the catalytic mechanism.

It belongs to the transaldolase family. Type 3B subfamily.

It is found in the cytoplasm. It catalyses the reaction D-sedoheptulose 7-phosphate + D-glyceraldehyde 3-phosphate = D-erythrose 4-phosphate + beta-D-fructose 6-phosphate. Its pathway is carbohydrate degradation; pentose phosphate pathway; D-glyceraldehyde 3-phosphate and beta-D-fructose 6-phosphate from D-ribose 5-phosphate and D-xylulose 5-phosphate (non-oxidative stage): step 2/3. In terms of biological role, transaldolase is important for the balance of metabolites in the pentose-phosphate pathway. This chain is Probable transaldolase, found in Jannaschia sp. (strain CCS1).